The chain runs to 176 residues: uncharacterized protein (176 aa).

The span at 87–100 (ASASSQLRASRVQS) shows a compositional bias: low complexity. Positions 87–109 (ASASSQLRASRVQSGTRQSARAG) are disordered.

This is an uncharacterized protein from Homo sapiens (Human).